The following is an 87-amino-acid chain: Small ribosomal subunit protein bS20 (87 aa).

The disordered stretch occupies residues 1–22; sequence MANTSQARKRARQAGVRRVRNA. A compositionally biased stretch (basic residues) spans 7 to 20; the sequence is ARKRARQAGVRRVR.

This sequence belongs to the bacterial ribosomal protein bS20 family.

Its function is as follows. Binds directly to 16S ribosomal RNA. The protein is Small ribosomal subunit protein bS20 of Nitrosococcus oceani (strain ATCC 19707 / BCRC 17464 / JCM 30415 / NCIMB 11848 / C-107).